Consider the following 393-residue polypeptide: Lipid-A-disaccharide synthase (393 aa).

Belongs to the LpxB family.

The catalysed reaction is a lipid X + a UDP-2-N,3-O-bis[(3R)-3-hydroxyacyl]-alpha-D-glucosamine = a lipid A disaccharide + UDP + H(+). It functions in the pathway bacterial outer membrane biogenesis; LPS lipid A biosynthesis. Functionally, condensation of UDP-2,3-diacylglucosamine and 2,3-diacylglucosamine-1-phosphate to form lipid A disaccharide, a precursor of lipid A, a phosphorylated glycolipid that anchors the lipopolysaccharide to the outer membrane of the cell. The chain is Lipid-A-disaccharide synthase from Bordetella bronchiseptica (strain ATCC BAA-588 / NCTC 13252 / RB50) (Alcaligenes bronchisepticus).